Consider the following 216-residue polypeptide: UPF0323 lipoprotein HPG27_212 (216 aa).

A signal peptide spans 1–27 (MKKPYRKISDYAIVGGLSALVMVSIVG). Cys28 carries N-palmitoyl cysteine lipidation. Cys28 carries the S-diacylglycerol cysteine lipid modification. The segment covering 159–170 (QRTYKSPQAYQR) has biased composition (polar residues). The tract at residues 159 to 216 (QRTYKSPQAYQRSQNSFSKSAPSASSMGGASKGQSGFFGSSRPTSSPAVSSGTRGFNS) is disordered. A compositionally biased stretch (low complexity) spans 171-209 (SQNSFSKSAPSASSMGGASKGQSGFFGSSRPTSSPAVSS).

It belongs to the UPF0323 family.

Its subcellular location is the cell membrane. The sequence is that of UPF0323 lipoprotein HPG27_212 from Helicobacter pylori (strain G27).